The following is a 176-amino-acid chain: NAD(P)H-quinone oxidoreductase subunit 6, chloroplastic (176 aa).

A run of 5 helical transmembrane segments spans residues Phe10 to Pro30, Ile33 to Leu53, Ala61 to Met81, Leu92 to Ile112, and Phe153 to Ile173.

The protein belongs to the complex I subunit 6 family. In terms of assembly, NDH is composed of at least 16 different subunits, 5 of which are encoded in the nucleus.

Its subcellular location is the plastid. It localises to the chloroplast thylakoid membrane. It carries out the reaction a plastoquinone + NADH + (n+1) H(+)(in) = a plastoquinol + NAD(+) + n H(+)(out). It catalyses the reaction a plastoquinone + NADPH + (n+1) H(+)(in) = a plastoquinol + NADP(+) + n H(+)(out). Its function is as follows. NDH shuttles electrons from NAD(P)H:plastoquinone, via FMN and iron-sulfur (Fe-S) centers, to quinones in the photosynthetic chain and possibly in a chloroplast respiratory chain. The immediate electron acceptor for the enzyme in this species is believed to be plastoquinone. Couples the redox reaction to proton translocation, and thus conserves the redox energy in a proton gradient. The protein is NAD(P)H-quinone oxidoreductase subunit 6, chloroplastic (ndhG) of Jasminum nudiflorum (Winter jasmine).